The primary structure comprises 202 residues: NADH-quinone oxidoreductase subunit C (202 aa).

This sequence belongs to the complex I 30 kDa subunit family. In terms of assembly, NDH-1 is composed of 14 different subunits. Subunits NuoB, C, D, E, F, and G constitute the peripheral sector of the complex.

Its subcellular location is the cell inner membrane. The catalysed reaction is a quinone + NADH + 5 H(+)(in) = a quinol + NAD(+) + 4 H(+)(out). Its function is as follows. NDH-1 shuttles electrons from NADH, via FMN and iron-sulfur (Fe-S) centers, to quinones in the respiratory chain. The immediate electron acceptor for the enzyme in this species is believed to be ubiquinone. Couples the redox reaction to proton translocation (for every two electrons transferred, four hydrogen ions are translocated across the cytoplasmic membrane), and thus conserves the redox energy in a proton gradient. This chain is NADH-quinone oxidoreductase subunit C, found in Acidovorax sp. (strain JS42).